The sequence spans 308 residues: Inosose dehydratase (308 aa).

This sequence belongs to the IolE/MocC family. Glutathione is required as a cofactor. The cofactor is Co(2+). It depends on Mn(2+) as a cofactor.

It carries out the reaction scyllo-inosose = 3D-3,5/4-trihydroxycyclohexane-1,2-dione + H2O. It functions in the pathway polyol metabolism; myo-inositol degradation into acetyl-CoA; acetyl-CoA from myo-inositol: step 2/7. Its function is as follows. Catalyzes the dehydration of inosose (2-keto-myo-inositol, 2KMI or 2,4,6/3,5-pentahydroxycyclohexanone) to 3D-(3,5/4)-trihydroxycyclohexane-1,2-dione (D-2,3-diketo-4-deoxy-epi-inositol). The chain is Inosose dehydratase from Geobacillus kaustophilus (strain HTA426).